Here is a 72-residue protein sequence, read N- to C-terminus: ATP synthase subunit c (72 aa).

2 helical membrane passes run 4 to 24 and 46 to 66; these read ALGA…GMGI and LLFI…LIAF.

The protein belongs to the ATPase C chain family. F-type ATPases have 2 components, F(1) - the catalytic core - and F(0) - the membrane proton channel. F(1) has five subunits: alpha(3), beta(3), gamma(1), delta(1), epsilon(1). F(0) has three main subunits: a(1), b(2) and c(10-14). The alpha and beta chains form an alternating ring which encloses part of the gamma chain. F(1) is attached to F(0) by a central stalk formed by the gamma and epsilon chains, while a peripheral stalk is formed by the delta and b chains.

The protein localises to the cell membrane. In terms of biological role, f(1)F(0) ATP synthase produces ATP from ADP in the presence of a proton or sodium gradient. F-type ATPases consist of two structural domains, F(1) containing the extramembraneous catalytic core and F(0) containing the membrane proton channel, linked together by a central stalk and a peripheral stalk. During catalysis, ATP synthesis in the catalytic domain of F(1) is coupled via a rotary mechanism of the central stalk subunits to proton translocation. Functionally, key component of the F(0) channel; it plays a direct role in translocation across the membrane. A homomeric c-ring of between 10-14 subunits forms the central stalk rotor element with the F(1) delta and epsilon subunits. This Syntrophomonas wolfei subsp. wolfei (strain DSM 2245B / Goettingen) protein is ATP synthase subunit c.